Reading from the N-terminus, the 120-residue chain is MGTLQEYDYLWFFLVIASIVPILAFTISEILAPIRSGPEKLTSYESGIEPKGQAWIQFHIRYYMFALVFVVFDVETVFLYPWAISFHSLGISAFIEALLFILILMVGLVYAWRKGALEWS.

The next 3 helical transmembrane spans lie at 10 to 30 (LWFFLVIASIVPILAFTISEI), 64 to 84 (MFALVFVVFDVETVFLYPWAI), and 89 to 109 (LGISAFIEALLFILILMVGLV).

This sequence belongs to the complex I subunit 3 family. In terms of assembly, NDH is composed of at least 16 different subunits, 5 of which are encoded in the nucleus.

The protein resides in the plastid. It localises to the chloroplast thylakoid membrane. The enzyme catalyses a plastoquinone + NADH + (n+1) H(+)(in) = a plastoquinol + NAD(+) + n H(+)(out). It carries out the reaction a plastoquinone + NADPH + (n+1) H(+)(in) = a plastoquinol + NADP(+) + n H(+)(out). NDH shuttles electrons from NAD(P)H:plastoquinone, via FMN and iron-sulfur (Fe-S) centers, to quinones in the photosynthetic chain and possibly in a chloroplast respiratory chain. The immediate electron acceptor for the enzyme in this species is believed to be plastoquinone. Couples the redox reaction to proton translocation, and thus conserves the redox energy in a proton gradient. The polypeptide is NAD(P)H-quinone oxidoreductase subunit 3, chloroplastic (Chara vulgaris (Common stonewort)).